The sequence spans 453 residues: UDP-N-acetylmuramoylalanine--D-glutamate ligase (453 aa).

ATP is bound at residue 117–123 (GANGKST).

Belongs to the MurCDEF family.

The protein resides in the cytoplasm. It catalyses the reaction UDP-N-acetyl-alpha-D-muramoyl-L-alanine + D-glutamate + ATP = UDP-N-acetyl-alpha-D-muramoyl-L-alanyl-D-glutamate + ADP + phosphate + H(+). It participates in cell wall biogenesis; peptidoglycan biosynthesis. Functionally, cell wall formation. Catalyzes the addition of glutamate to the nucleotide precursor UDP-N-acetylmuramoyl-L-alanine (UMA). In Methylobacillus flagellatus (strain ATCC 51484 / DSM 6875 / VKM B-1610 / KT), this protein is UDP-N-acetylmuramoylalanine--D-glutamate ligase.